Consider the following 394-residue polypeptide: Ketoisovalerate oxidoreductase subunit VorA (394 aa).

In terms of assembly, heterotetramer of one alpha, one beta, one delta and one gamma chain.

It carries out the reaction 3-methyl-2-oxobutanoate + 2 oxidized [2Fe-2S]-[ferredoxin] + CoA = 2-methylpropanoyl-CoA + 2 reduced [2Fe-2S]-[ferredoxin] + CO2 + H(+). The polypeptide is Ketoisovalerate oxidoreductase subunit VorA (vorA) (Pyrococcus furiosus (strain ATCC 43587 / DSM 3638 / JCM 8422 / Vc1)).